The chain runs to 454 residues: Dihydrolipoyllysine-residue succinyltransferase component of 2-oxoglutarate dehydrogenase complex, mitochondrial (454 aa).

The transit peptide at 1–68 (MLSRSRCVSR…RFFQTTAVCK (68 aa)) directs the protein to the mitochondrion. The 75-residue stretch at 71 to 145 (VITVQTPAFA…EGGTPLFTLR (75 aa)) folds into the Lipoyl-binding domain. S82 carries the phosphoserine modification. K111 is modified (N6-lipoyllysine). A disordered region spans residues 147–227 (TGAAPAKAKP…KGLRSEHREK (81 aa)). The segment covering 149–163 (AAPAKAKPAETPAPA) has biased composition (low complexity). Position 155 is an N6-acetyllysine (K155). Positions 186 to 197 (PPVPSPSQPPSS) are enriched in pro residues. A compositionally biased stretch (low complexity) spans 198 to 217 (KPVSAIKPTAAPPLAEAGAA). An N6-acetyllysine mark is found at K268, K273, K274, K278, and K308. Residues H425 and D429 contribute to the active site.

The protein belongs to the 2-oxoacid dehydrogenase family. In terms of assembly, the 2-oxoglutarate dehydrogenase complex is composed of OGDH (2-oxoglutarate dehydrogenase; E1), DLST (dihydrolipoamide succinyltransferase; E2), DLD (dihydrolipoamide dehydrogenase; E3) and the assembly factor KGD4. It contains multiple copies of the three enzymatic components (E1, E2 and E3). In the nucleus, the 2-oxoglutarate dehydrogenase complex associates with KAT2A. Interacts with ABHD11; this interaction maintains the functional lipoylation of the 2-oxoglutarate dehydrogenase complex. (R)-lipoate serves as cofactor.

Its subcellular location is the mitochondrion matrix. The protein resides in the nucleus. It carries out the reaction N(6)-[(R)-dihydrolipoyl]-L-lysyl-[protein] + succinyl-CoA = N(6)-[(R)-S(8)-succinyldihydrolipoyl]-L-lysyl-[protein] + CoA. The protein operates within amino-acid degradation; L-lysine degradation via saccharopine pathway; glutaryl-CoA from L-lysine: step 6/6. Its pathway is carbohydrate metabolism; tricarboxylic acid cycle. Dihydrolipoamide succinyltransferase (E2) component of the 2-oxoglutarate dehydrogenase complex. The 2-oxoglutarate dehydrogenase complex catalyzes the overall conversion of 2-oxoglutarate to succinyl-CoA and CO(2). The 2-oxoglutarate dehydrogenase complex is mainly active in the mitochondrion. A fraction of the 2-oxoglutarate dehydrogenase complex also localizes in the nucleus and is required for lysine succinylation of histones: associates with KAT2A on chromatin and provides succinyl-CoA to histone succinyltransferase KAT2A. This is Dihydrolipoyllysine-residue succinyltransferase component of 2-oxoglutarate dehydrogenase complex, mitochondrial from Mus musculus (Mouse).